Consider the following 469-residue polypeptide: 3-isopropylmalate dehydratase large subunit (469 aa).

[4Fe-4S] cluster contacts are provided by C349, C409, and C412.

The protein belongs to the aconitase/IPM isomerase family. LeuC type 1 subfamily. Heterodimer of LeuC and LeuD. [4Fe-4S] cluster is required as a cofactor.

The catalysed reaction is (2R,3S)-3-isopropylmalate = (2S)-2-isopropylmalate. It functions in the pathway amino-acid biosynthesis; L-leucine biosynthesis; L-leucine from 3-methyl-2-oxobutanoate: step 2/4. Catalyzes the isomerization between 2-isopropylmalate and 3-isopropylmalate, via the formation of 2-isopropylmaleate. The chain is 3-isopropylmalate dehydratase large subunit from Methylorubrum populi (strain ATCC BAA-705 / NCIMB 13946 / BJ001) (Methylobacterium populi).